An 842-amino-acid polypeptide reads, in one-letter code: Synaptonemal complex protein 2-like (842 aa).

Disordered stretches follow at residues 451 to 473, 505 to 560, 619 to 666, and 715 to 738; these read GSLEITNTEERSLENSKQDEPEQ, FARD…KQRV, STQK…SSLE, and EDAPGSPVVTDTSTPSQEDMPGSV. Basic and acidic residues-rich tracts occupy residues 458–470 and 505–525; these read TEERSLENSKQDE and FARDREQDRRMPFNDRNHDLL. A compositionally biased stretch (basic residues) spans 543–559; it reads NHKRKSLRTYSQRKKQR. Composition is skewed to basic and acidic residues over residues 624 to 633 and 643 to 655; these read GLEKPERRGS and RVTDGLHWREPRS.

It belongs to the SYCP2 family. In terms of tissue distribution, specifically expressed in oocytes.

The protein localises to the nucleus. It is found in the chromosome. The protein resides in the centromere. In terms of biological role, oocyte-specific protein that localizes to centromeres at the dictyate stage and regulates the survival of primordial oocytes. This is Synaptonemal complex protein 2-like from Mus musculus (Mouse).